Reading from the N-terminus, the 356-residue chain is DNA polymerase IV (356 aa).

Residues 6–187 form the UmuC domain; sequence IIHIDMDYFF…LDIGDFPGVG (182 aa). 2 residues coordinate Mg(2+): aspartate 10 and aspartate 105. Glutamate 106 is an active-site residue.

It belongs to the DNA polymerase type-Y family. In terms of assembly, monomer. The cofactor is Mg(2+).

The protein resides in the cytoplasm. It carries out the reaction DNA(n) + a 2'-deoxyribonucleoside 5'-triphosphate = DNA(n+1) + diphosphate. Poorly processive, error-prone DNA polymerase involved in untargeted mutagenesis. Copies undamaged DNA at stalled replication forks, which arise in vivo from mismatched or misaligned primer ends. These misaligned primers can be extended by PolIV. Exhibits no 3'-5' exonuclease (proofreading) activity. May be involved in translesional synthesis, in conjunction with the beta clamp from PolIII. The protein is DNA polymerase IV of Staphylococcus aureus (strain MRSA252).